The following is a 113-amino-acid chain: MDLLKSLEEEQLRKDLPEFRPGDTVKVYFKVIEGNRERIQPYEGVVIRKRGSGLSATFTVRRVSYGIGVERTFPLHSPRIEKIEVIRRGKVRRARLYYLRKLTGKAARIAERR.

It belongs to the bacterial ribosomal protein bL19 family.

Functionally, this protein is located at the 30S-50S ribosomal subunit interface and may play a role in the structure and function of the aminoacyl-tRNA binding site. This chain is Large ribosomal subunit protein bL19, found in Carboxydothermus hydrogenoformans (strain ATCC BAA-161 / DSM 6008 / Z-2901).